A 162-amino-acid polypeptide reads, in one-letter code: MSKPGGHSRHGRRDGIDPVLRSRARRRALQAVYAWQISGGFAKQVIAQFAHEQAHEVADLAYFENLVEGVLSNRAELDTALTPYLDRSVEEVDAIERAVLRLAAYELLYRQDVPYRVVINEAIETAKRFGSEHGHTYVNGVLDRAAVEWRKVESGASGASGA.

The protein belongs to the NusB family.

Functionally, involved in transcription antitermination. Required for transcription of ribosomal RNA (rRNA) genes. Binds specifically to the boxA antiterminator sequence of the ribosomal RNA (rrn) operons. This is Transcription antitermination protein NusB from Xanthomonas euvesicatoria pv. vesicatoria (strain 85-10) (Xanthomonas campestris pv. vesicatoria).